The chain runs to 522 residues: MQLPSSTKILVVGGGPAGSTAATLLAREGFEVTLVEKAIFPRYHIGESLLISVQPIIDLLGAREAVEAHGFQRKKGVLWEWGGERWLFDWKKLRYDYTFHVKREEFDEILLRNAQKNGVKVFEGIDISRLEFDGERPVAAKWSKSSTGESGTIQFEFLLDASGRAGLMATQYLRSRMFMKAFQNVATWGYWKGATIPEVEVEGPITVGSIPYGWIWGIPLRDQTMSVGLVIHQELFKEKRATQSVEEIYHEGLKASPLFQDVVLKGATLEPQIRTETDYSYISRTLAGPGFFLVGDSGAFIDPLLSSGVHLAMHSALLAAASVKSIIAGEVDMASATEFYQRCYQGHFLRWALIVASFYEVNARKETYFWTAQQLAHEELGVFNMSQADMKDVFATMVSGVVDLGDAQNAGRLQKGAERVHQYLDDDGREEDVTALLQKSKQRIFEYLDRVKNRDSRAAMQRYKAGGTETFSMGLDADGAVGGLYVTTEPRLGLLRKVVEERAEAATEAPAPAAPPPAVAEV.

FAD contacts are provided by alanine 17, glutamate 36, arginine 42, histidine 44, isoleucine 45, serine 48, arginine 103, isoleucine 127, and aspartate 296. Residues serine 307 and glycine 308 each coordinate chloride. Position 309 (valine 309) interacts with FAD.

Belongs to the flavin-dependent halogenase family.

Functionally, involved in the incorporation of a chlorinated tryptophan residue into halogenated forms of the secondary metabolites called chondramides. The polypeptide is Tryptophan 2-halogenase (Chondromyces crocatus).